The primary structure comprises 352 residues: Protein RecA (352 aa).

66 to 73 (GPESSGKT) contacts ATP. Residues 330–352 (TKDDSKVATVDKANEEQAAEPVQ) are disordered.

It belongs to the RecA family.

Its subcellular location is the cytoplasm. Functionally, can catalyze the hydrolysis of ATP in the presence of single-stranded DNA, the ATP-dependent uptake of single-stranded DNA by duplex DNA, and the ATP-dependent hybridization of homologous single-stranded DNAs. It interacts with LexA causing its activation and leading to its autocatalytic cleavage. The sequence is that of Protein RecA from Psychrobacter cryohalolentis (strain ATCC BAA-1226 / DSM 17306 / VKM B-2378 / K5).